The primary structure comprises 341 residues: Putative amino-acid ABC transporter-binding protein YhdW (341 aa).

The signal sequence occupies residues 1–19; it reads MKKMMIATLAAASVLLAVA.

The protein belongs to the bacterial solute-binding protein 3 family.

It is found in the periplasm. In terms of biological role, probably part of the binding-protein-dependent transport system YdhWXYZ for an amino acid. In Escherichia coli (strain K12), this protein is Putative amino-acid ABC transporter-binding protein YhdW (yhdW).